The following is a 360-amino-acid chain: Protein phosphatase 1 regulatory subunit 7 (360 aa).

The interval 1–64 (MAAERGAGQQ…GEEDPEEEHE (64 aa)) is disordered. Alanine 2 carries the N-acetylalanine modification. Serine 12, serine 24, serine 27, serine 44, and serine 47 each carry phosphoserine. Residues 17–34 (EVDRRVESEESGDEEGKK) are compositionally biased toward basic and acidic residues. Over residues 53-63 (ERGEEDPEEEH) the composition is skewed to acidic residues. LRR repeat units follow at residues 77–98 (DAEDVDLNHYRIGKIEGFEVLK), 99–120 (KVKTLCLRQNLIKCIENLEELQ), 121–142 (SLRELDLYDNQIKKIENLEALT), 143–164 (ELEILDISFNLLRNIEGVDKLT), 165–186 (RLKKLFLVNNKISKIENLSNLH), 187–208 (QLQMLELGSNRIRAIENIDTLT), 209–230 (NLESLFLGKNKITKLQNLDALT), 231–252 (NLTVLSMQSNRLTKIEGLQNLV), 253–274 (NLRELYLSHNGIEVIEGLENNN), 275–296 (KLTMLDIASNRIKKIENISHLT), and 297–318 (ELQEFWMNDNLLESWSDLDELK). Serine 322 is subject to Phosphoserine. One can recognise an LRRCT domain in the interval 331–360 (NPLQKDPQYRRKVMLALPSVRQIDATFVRF).

This sequence belongs to the SDS22 family. As to quaternary structure, interacts with PPP1CA, PPP1CB and PPP1CC/PPP1G isoform 1. In terms of tissue distribution, widely expressed.

Its subcellular location is the nucleus. Regulatory subunit of protein phosphatase 1. This is Protein phosphatase 1 regulatory subunit 7 (PPP1R7) from Homo sapiens (Human).